A 353-amino-acid chain; its full sequence is UPF0283 membrane protein YcjF (353 aa).

A compositionally biased stretch (basic and acidic residues) spans 1-19 (MSEPLKPRIDFAEPLKEEP). The tract at residues 1 to 35 (MSEPLKPRIDFAEPLKEEPTSAFKAQQTFSEAESR) is disordered. 3 consecutive transmembrane segments (helical) span residues 70-90 (MVMGGLALFGASVVGQGVQWT), 100-120 (VALGGCAAGALIIGAGVGSVV), and 213-233 (ESTLMIAVSPLALVDMAFIAW).

It belongs to the UPF0283 family.

Its subcellular location is the cell inner membrane. This Salmonella dublin (strain CT_02021853) protein is UPF0283 membrane protein YcjF.